Reading from the N-terminus, the 237-residue chain is Glucosamine-6-phosphate deaminase (237 aa).

Asp-67 serves as the catalytic Proton acceptor; for enolization step. Residue Asn-136 is the For ring-opening step of the active site. Residue His-138 is the Proton acceptor; for ring-opening step of the active site. The For ring-opening step role is filled by Glu-143.

This sequence belongs to the glucosamine/galactosamine-6-phosphate isomerase family. NagB subfamily.

The catalysed reaction is alpha-D-glucosamine 6-phosphate + H2O = beta-D-fructose 6-phosphate + NH4(+). It participates in amino-sugar metabolism; N-acetylneuraminate degradation; D-fructose 6-phosphate from N-acetylneuraminate: step 5/5. Its function is as follows. Catalyzes the reversible isomerization-deamination of glucosamine 6-phosphate (GlcN6P) to form fructose 6-phosphate (Fru6P) and ammonium ion. The sequence is that of Glucosamine-6-phosphate deaminase from Lysinibacillus sphaericus (strain C3-41).